The primary structure comprises 470 residues: Cell division protein FtsP (470 aa).

The tat-type signal signal peptide spans 1-27 (MSLSRRQFIQASGIALCAGAVPLKASA). The Plastocyanin-like domain occupies 229 to 287 (VRLRLLNASNSRRYQLQMSDGRPLHVISGDQGFLPAPVSVKQLSLAPGERREILVDMSN).

This sequence belongs to the FtsP family. Post-translationally, predicted to be exported by the Tat system. The position of the signal peptide cleavage has not been experimentally proven.

It localises to the periplasm. Its function is as follows. Cell division protein that is required for growth during stress conditions. May be involved in protecting or stabilizing the divisomal assembly under conditions of stress. The protein is Cell division protein FtsP of Shigella dysenteriae serotype 1 (strain Sd197).